The primary structure comprises 360 residues: BLOC-1-related complex subunit 6 (360 aa).

The disordered stretch occupies residues Met1–Thr201. The segment covering Ala23–Pro33 has biased composition (polar residues). Thr41 carries the post-translational modification Phosphothreonine. Residue Ser130 is modified to Phosphoserine. A compositionally biased stretch (acidic residues) spans Glu144–Ala155. The residue at position 173 (Ser173) is a Phosphoserine. Residues Gly179 to Arg198 show a composition bias toward gly residues. Thr201 bears the Phosphothreonine mark. At Ser204 the chain carries Phosphoserine.

This sequence belongs to the BORCS6 family. As to quaternary structure, component of the BLOC-one-related complex (BORC) which is composed of BLOC1S1, BLOC1S2, BORCS5, BORCS6, BORCS7, BORCS8, KXD1 and SNAPIN.

Its subcellular location is the lysosome membrane. In terms of biological role, as part of the BORC complex may play a role in lysosomes movement and localization at the cell periphery. Associated with the cytosolic face of lysosomes, the BORC complex may recruit ARL8B and couple lysosomes to microtubule plus-end-directed kinesin motor. The sequence is that of BLOC-1-related complex subunit 6 from Mus musculus (Mouse).